Here is a 310-residue protein sequence, read N- to C-terminus: Apolipoprotein E (310 aa).

Positions 1–18 are cleaved as a signal peptide; it reads MKVLWAALVVTLLAGCQA. Repeat copies occupy residues 77 to 98, 99 to 120, 121 to 142, and 143 to 164. The tract at residues 77–248 is 8 X 22 AA approximate tandem repeats; sequence ALMEETMKEV…RLDEVREQVQ (172 aa). Residue methionine 140 is modified to Methionine sulfoxide. Serine 144 is subject to Phosphoserine. The tract at residues 155-165 is LDL and other lipoprotein receptors binding; sequence HLRKLRKRLLR. 159–162 contributes to the heparin binding site; it reads LRKR. A repeat spans 165-186; the sequence is RDAEDLQKRLAVYQAGIREGAE. Repeat copies occupy residues 187 to 204, 205 to 226, and 227 to 248. A lipid-binding and lipoprotein association region spans residues 203–283; sequence AATVRSLISK…SWFEPLVQDM (81 aa). 222 to 229 serves as a coordination point for heparin; sequence GQRLRGRL. The interval 259–310 is homooligomerization; sequence NQMRLQAEAFHARLKSWFEPLVQDMQQKWAELVEKVQLAVGTSPTSESSEKQ. A specificity for association with VLDL region spans residues 271–283; it reads RLKSWFEPLVQDM.

The protein belongs to the apolipoprotein A1/A4/E family. In terms of assembly, homotetramer. May interact with ABCA1; functionally associated with ABCA1 in the biogenesis of HDLs. May interact with APP/A4 amyloid-beta peptide; the interaction is extremely stable in vitro but its physiological significance is unclear. May interact with MAPT. May interact with MAP2. In the cerebrospinal fluid, interacts with secreted SORL1. Interacts with PMEL; this allows the loading of PMEL luminal fragment on ILVs to induce fibril nucleation. Post-translationally, APOE exists as multiple glycosylated and sialylated glycoforms within cells and in plasma. The extent of glycosylation and sialylation are tissue and context specific. Glycated in plasma VLDL. In terms of processing, phosphorylated by FAM20C in the extracellular medium.

Its subcellular location is the secreted. The protein localises to the extracellular space. The protein resides in the extracellular matrix. It localises to the extracellular vesicle. It is found in the endosome. Its subcellular location is the multivesicular body. Functionally, APOE is an apolipoprotein, a protein associating with lipid particles, that mainly functions in lipoprotein-mediated lipid transport between organs via the plasma and interstitial fluids. APOE is a core component of plasma lipoproteins and is involved in their production, conversion and clearance. Apolipoproteins are amphipathic molecules that interact both with lipids of the lipoprotein particle core and the aqueous environment of the plasma. As such, APOE associates with chylomicrons, chylomicron remnants, very low density lipoproteins (VLDL) and intermediate density lipoproteins (IDL) but shows a preferential binding to high-density lipoproteins (HDL). It also binds a wide range of cellular receptors including the LDL receptor/LDLR, the LDL receptor-related proteins LRP1, LRP2 and LRP8 and the very low-density lipoprotein receptor/VLDLR that mediate the cellular uptake of the APOE-containing lipoprotein particles. Finally, APOE also has a heparin-binding activity and binds heparan-sulfate proteoglycans on the surface of cells, a property that supports the capture and the receptor-mediated uptake of APOE-containing lipoproteins by cells. A main function of APOE is to mediate lipoprotein clearance through the uptake of chylomicrons, VLDLs, and HDLs by hepatocytes. APOE is also involved in the biosynthesis by the liver of VLDLs as well as their uptake by peripheral tissues ensuring the delivery of triglycerides and energy storage in muscle, heart and adipose tissues. By participating in the lipoprotein-mediated distribution of lipids among tissues, APOE plays a critical role in plasma and tissues lipid homeostasis. APOE is also involved in two steps of reverse cholesterol transport, the HDLs-mediated transport of cholesterol from peripheral tissues to the liver, and thereby plays an important role in cholesterol homeostasis. First, it is functionally associated with ABCA1 in the biogenesis of HDLs in tissues. Second, it is enriched in circulating HDLs and mediates their uptake by hepatocytes. APOE also plays an important role in lipid transport in the central nervous system, regulating neuron survival and sprouting. In Tapirus terrestris (Lowland tapir), this protein is Apolipoprotein E (APOE).